The chain runs to 241 residues: DNA repair protein RecO (241 aa).

This sequence belongs to the RecO family.

Involved in DNA repair and RecF pathway recombination. The chain is DNA repair protein RecO from Orientia tsutsugamushi (strain Boryong) (Rickettsia tsutsugamushi).